The sequence spans 410 residues: MAHTNKHYLDLPGSYFFTEINQRVNTYKKTHPEKSIIRLSIGDVTRPLVPAVIKALHDATDEMGQPSSFHGYGPEHGYEFLIGEIIANDYTSRNVHIEADEIFVSDGTKCDIANIQELFDPSDTVAIIDPVYPVYIDSNVMSGRLGKLINGIWSKLIYLPCTIENNFIPELPTQHPDIIYLCYPNNPTGTVLSKDQLTIWVNYAKKEGAIILFDAAYEAYITDPTIPHSIYEIDGAKEVAIEFRSFSKTAGFTGLRCAYTVIPKELKANTREGNEQYLNMMWNRRQTTKYNGCSYIVQKAAAAIYTPEGQKQIQESIQYYMKNALIIQNAITQMGITAVGGINAPYVWIKTPDNLSSWDFFDLLLQNAGVVGTPGVGFGPHGEGYFRLTGFGSYEDTNKAIERIQKALLI.

The substrate site is built by Y15 and G42. Pyridoxal 5'-phosphate-binding positions include Y72, 108–109 (TK), Y132, N186, Y217, and 245–247 (SFS). 3 residues coordinate substrate: K109, Y132, and N186. N6-(pyridoxal phosphate)lysine is present on K248. The pyridoxal 5'-phosphate site is built by R256 and N291. Substrate-binding residues include N291 and R387.

This sequence belongs to the class-I pyridoxal-phosphate-dependent aminotransferase family. LL-diaminopimelate aminotransferase subfamily. In terms of assembly, homodimer. Pyridoxal 5'-phosphate serves as cofactor.

The enzyme catalyses (2S,6S)-2,6-diaminopimelate + 2-oxoglutarate = (S)-2,3,4,5-tetrahydrodipicolinate + L-glutamate + H2O + H(+). It participates in amino-acid biosynthesis; L-lysine biosynthesis via DAP pathway; LL-2,6-diaminopimelate from (S)-tetrahydrodipicolinate (aminotransferase route): step 1/1. In terms of biological role, involved in the synthesis of meso-diaminopimelate (m-DAP or DL-DAP), required for both lysine and peptidoglycan biosynthesis. Catalyzes the direct conversion of tetrahydrodipicolinate to LL-diaminopimelate. The sequence is that of LL-diaminopimelate aminotransferase from Lawsonia intracellularis (strain PHE/MN1-00).